Reading from the N-terminus, the 404-residue chain is Cysteine desulfurase IscS (404 aa).

Pyridoxal 5'-phosphate is bound by residues 75–76, N155, Q183, and 203–205; these read AT and SSH. K206 carries the post-translational modification N6-(pyridoxal phosphate)lysine. T243 provides a ligand contact to pyridoxal 5'-phosphate. Residue C328 is the Cysteine persulfide intermediate of the active site. C328 is a binding site for [2Fe-2S] cluster.

The protein belongs to the class-V pyridoxal-phosphate-dependent aminotransferase family. NifS/IscS subfamily. As to quaternary structure, homodimer. Forms a heterotetramer with IscU, interacts with other sulfur acceptors. The cofactor is pyridoxal 5'-phosphate.

Its subcellular location is the cytoplasm. The catalysed reaction is (sulfur carrier)-H + L-cysteine = (sulfur carrier)-SH + L-alanine. It functions in the pathway cofactor biosynthesis; iron-sulfur cluster biosynthesis. Its function is as follows. Master enzyme that delivers sulfur to a number of partners involved in Fe-S cluster assembly, tRNA modification or cofactor biosynthesis. Catalyzes the removal of elemental sulfur atoms from cysteine to produce alanine. Functions as a sulfur delivery protein for Fe-S cluster synthesis onto IscU, an Fe-S scaffold assembly protein, as well as other S acceptor proteins. This Histophilus somni (strain 2336) (Haemophilus somnus) protein is Cysteine desulfurase IscS.